A 132-amino-acid polypeptide reads, in one-letter code: Intraflagellar transport protein 20 homolog (132 aa).

The stretch at 87–114 forms a coiled coil; it reads EAQQQQLYALIAEKKMQLERYRIEYEAL.

The protein localises to the golgi apparatus. It is found in the cis-Golgi network. Its subcellular location is the cytoplasm. The protein resides in the cytoskeleton. It localises to the microtubule organizing center. The protein localises to the centrosome. It is found in the centriole. Its subcellular location is the cell projection. The protein resides in the cilium. It localises to the cytoplasmic vesicle. The protein localises to the secretory vesicle. It is found in the acrosome. In terms of biological role, involved in ciliary process assembly. May play a role in the trafficking of ciliary membrane proteins from the Golgi complex to the cilium. Regulates the platelet-derived growth factor receptor-alpha (PDGFRA) signaling pathway. Plays an important role in spermatogenesis, particularly spermiogenesis, when germ cells form flagella. The chain is Intraflagellar transport protein 20 homolog (ift20) from Xenopus tropicalis (Western clawed frog).